A 130-amino-acid chain; its full sequence is Holin-like protein CidA (130 aa).

A run of 4 helical transmembrane segments spans residues 6 to 26 (FVIK…IGTE), 31 to 51 (LHIP…LLQF), 65 to 85 (FLLK…MDVA), and 93 to 113 (ILFF…SGYI).

It belongs to the CidA/LrgA family. CidA subfamily.

It localises to the cell membrane. Increases the activity of extracellular murein hydrolases possibly by mediating their export via hole formation. Inhibited by the antiholin-like proteins LrgAB. In an unstressed cell, the LrgAB products probably inhibit the function of the CidAB proteins. When a cell is stressed by the addition of antibiotics or by other factors in the environment, the CidAB proteins possibly oligomerize within the bacterial cell membrane, creating lesions that disrupt the proton motive force, which in turn results in loss of cell viability. These lesions are also hypothesized to regulate the subsequent cell lysis by either allowing the murein hydrolases access to the cell wall substrate and/or regulating their activity by a possible change in the cell wall pH that results from loss of membrane potential. The polypeptide is Holin-like protein CidA (Staphylococcus epidermidis (strain ATCC 35984 / DSM 28319 / BCRC 17069 / CCUG 31568 / BM 3577 / RP62A)).